Here is an 868-residue protein sequence, read N- to C-terminus: LPS-assembly protein LptD (868 aa).

The signal sequence occupies residues Met1–Ala24.

Belongs to the LptD family. In terms of assembly, component of the lipopolysaccharide transport and assembly complex. Interacts with LptE and LptA.

It localises to the cell outer membrane. Together with LptE, is involved in the assembly of lipopolysaccharide (LPS) at the surface of the outer membrane. This is LPS-assembly protein LptD from Francisella tularensis subsp. tularensis (strain FSC 198).